A 240-amino-acid chain; its full sequence is tRNA (guanine-N(1)-)-methyltransferase (240 aa).

S-adenosyl-L-methionine contacts are provided by residues Gly-108 and 127 to 132; that span reads IGDYVL.

The protein belongs to the RNA methyltransferase TrmD family. Homodimer.

The protein resides in the cytoplasm. The catalysed reaction is guanosine(37) in tRNA + S-adenosyl-L-methionine = N(1)-methylguanosine(37) in tRNA + S-adenosyl-L-homocysteine + H(+). In terms of biological role, specifically methylates guanosine-37 in various tRNAs. The sequence is that of tRNA (guanine-N(1)-)-methyltransferase from Lactobacillus johnsonii (strain CNCM I-12250 / La1 / NCC 533).